The sequence spans 340 residues: Phospho-N-acetylmuramoyl-pentapeptide-transferase (340 aa).

The next 9 helical transmembrane spans lie at 24 to 44 (VPFG…LPVL), 69 to 89 (TMGG…GSGW), 95 to 115 (AVAL…WLVI), 129 to 149 (LLLQ…QGIP), 156 to 176 (GIGA…VLVG), 196 to 216 (ALVL…LVAF), 235 to 255 (LFMG…LALL), 260 to 280 (WALA…ILQV), and 316 to 336 (VVGC…AWWH).

This sequence belongs to the glycosyltransferase 4 family. MraY subfamily. Requires Mg(2+) as cofactor.

It is found in the cell inner membrane. The enzyme catalyses UDP-N-acetyl-alpha-D-muramoyl-L-alanyl-gamma-D-glutamyl-meso-2,6-diaminopimeloyl-D-alanyl-D-alanine + di-trans,octa-cis-undecaprenyl phosphate = di-trans,octa-cis-undecaprenyl diphospho-N-acetyl-alpha-D-muramoyl-L-alanyl-D-glutamyl-meso-2,6-diaminopimeloyl-D-alanyl-D-alanine + UMP. Its pathway is cell wall biogenesis; peptidoglycan biosynthesis. Its function is as follows. Catalyzes the initial step of the lipid cycle reactions in the biosynthesis of the cell wall peptidoglycan: transfers peptidoglycan precursor phospho-MurNAc-pentapeptide from UDP-MurNAc-pentapeptide onto the lipid carrier undecaprenyl phosphate, yielding undecaprenyl-pyrophosphoryl-MurNAc-pentapeptide, known as lipid I. This is Phospho-N-acetylmuramoyl-pentapeptide-transferase from Synechococcus sp. (strain JA-3-3Ab) (Cyanobacteria bacterium Yellowstone A-Prime).